The primary structure comprises 73 residues: Putative defensin-like protein 42 (73 aa).

4 disulfides stabilise this stretch: Cys6–Cys58, Cys18–Cys41, Cys27–Cys50, and Cys31–Cys52.

It belongs to the DEFL family.

The protein is Putative defensin-like protein 42 of Arabidopsis thaliana (Mouse-ear cress).